A 566-amino-acid polypeptide reads, in one-letter code: APC membrane recruitment protein 2 (566 aa).

Disordered regions lie at residues 120-176 (KKNG…PGLI), 192-237 (TQKP…SPCS), 277-307 (VTGC…GKKV), and 342-533 (MIPP…RTKI). Composition is skewed to basic and acidic residues over residues 123-134 (GKSENVRGEQAE), 155-168 (SKKD…KEGA), and 192-204 (TQKP…KSTE). Composition is skewed to basic and acidic residues over residues 364–377 (REVK…DRNA) and 389–411 (YRKE…RNSD). Positions 464–476 (PPLSHSHSKPLSP) are enriched in low complexity. 2 stretches are compositionally biased toward polar residues: residues 477–489 (VTTS…ASSN) and 504–517 (HTTN…SGSA).

Belongs to the Amer family.

It localises to the cell membrane. Negative regulator of the canonical Wnt signaling pathway involved in neuroectodermal patterning. Acts by specifically binding phosphatidylinositol 4,5-bisphosphate (PtdIns(4,5)P2), translocating to the cell membrane and interacting with key regulators of the canonical Wnt signaling pathway, such as components of the beta-catenin destruction complex. The protein is APC membrane recruitment protein 2 (amer2) of Xenopus tropicalis (Western clawed frog).